The primary structure comprises 164 residues: Peptidyl-prolyl cis-trans isomerase A (164 aa).

M1 is subject to N-acetylmethionine. Residue V2 is modified to N-acetylvaline; in Peptidyl-prolyl cis-trans isomerase A, N-terminally processed. The PPIase cyclophilin-type domain maps to 7–163; that stretch reads FFDIAVDGEP…KKITIADCGQ (157 aa). K28 bears the N6-acetyllysine; alternate mark. K28 participates in a covalent cross-link: Glycyl lysine isopeptide (Lys-Gly) (interchain with G-Cter in SUMO2); alternate. Residue K28 forms a Glycyl lysine isopeptide (Lys-Gly) (interchain with G-Cter in ubiquitin); alternate linkage. K44 and K76 each carry N6-acetyllysine. C62 and C161 form a disulfide bridge. S77 carries the post-translational modification Phosphoserine. The residue at position 82 (K82) is an N6-acetyllysine; alternate. K82 is covalently cross-linked (Glycyl lysine isopeptide (Lys-Gly) (interchain with G-Cter in SUMO2); alternate). A Phosphothreonine modification is found at T93. N108 carries N-linked (GlcNAc...) asparagine glycosylation. K125, K131, and K133 each carry N6-acetyllysine.

The protein belongs to the cyclophilin-type PPIase family. PPIase A subfamily. Interacts with protein phosphatase PPP3CA/calcineurin A. Interacts with isoform 2 of BSG/CD147. Interacts with FOXO1; the interaction promotes FOXO1 dephosphorylation, nuclear accumulation and transcriptional activity. Interacts with integrin ITGA2B:ITGB3; the interaction is ROS and peptidyl-prolyl cis-trans isomerase (PPIase) activity-dependent and is increased in the presence of thrombin. Interacts with MAP3K5. Interacts with TARDBP; the interaction is dependent on the RNA-binding activity of TARDBP and the PPIase activity of PPIA/CYPA and the acetylation of PPIA/CYPA at Lys-125 favors the interaction. Interacts with HNRNPA1, HNRNPA2B1, HNRNPC, RBMX, HNRNPK and HNRNPM. Post-translationally, acetylation at Lys-125 markedly inhibits catalysis of cis to trans isomerization. PPIA acetylation also antagonizes the immunosuppressive effects of cyclosporine by inhibiting the sequential steps of cyclosporine binding and calcineurin inhibition. Acetylation at Lys-125 favors the interaction with TARDBP.

It localises to the cytoplasm. The protein resides in the secreted. Its subcellular location is the nucleus. It carries out the reaction [protein]-peptidylproline (omega=180) = [protein]-peptidylproline (omega=0). With respect to regulation, binds cyclosporin A (CsA). CsA mediates some of its effects via an inhibitory action on PPIase. In terms of biological role, catalyzes the cis-trans isomerization of proline imidic peptide bonds in oligopeptides. Exerts a strong chemotactic effect on leukocytes partly through activation of one of its membrane receptors BSG/CD147, initiating a signaling cascade that culminates in MAPK/ERK activation. Activates endothelial cells (ECs) in a proinflammatory manner by stimulating activation of NF-kappa-B and ERK, JNK and p38 MAP-kinases and by inducing expression of adhesion molecules including SELE and VCAM1. Induces apoptosis in ECs by promoting the FOXO1-dependent expression of CCL2 and BCL2L11 which are involved in EC chemotaxis and apoptosis. In response to oxidative stress, initiates proapoptotic and antiapoptotic signaling in ECs via activation of NF-kappa-B and AKT1 and up-regulation of antiapoptotic protein BCL2. Negatively regulates MAP3K5/ASK1 kinase activity, autophosphorylation and oxidative stress-induced apoptosis mediated by MAP3K5/ASK1. Necessary for the assembly of TARDBP in heterogeneous nuclear ribonucleoprotein (hnRNP) complexes and regulates TARDBP binding to RNA UG repeats and TARDBP-dependent expression of HDAC6, ATG7 and VCP which are involved in clearance of protein aggregates. Plays an important role in platelet activation and aggregation. Regulates calcium mobilization and integrin ITGA2B:ITGB3 bidirectional signaling via increased ROS production as well as by facilitating the interaction between integrin and the cell cytoskeleton. Binds heparan sulfate glycosaminoglycans. The sequence is that of Peptidyl-prolyl cis-trans isomerase A (PPIA) from Bos taurus (Bovine).